The chain runs to 397 residues: Succinate--CoA ligase [ADP-forming] subunit beta (397 aa).

Positions 9 to 254 (KALLAQYGAP…ETEEDPKELA (246 aa)) constitute an ATP-grasp domain. ATP-binding positions include Lys46, 53–55 (GRG), Glu109, Ser112, and Glu117. The Mg(2+) site is built by Asn209 and Asp223. Substrate contacts are provided by residues Asn274 and 331–333 (GIM).

This sequence belongs to the succinate/malate CoA ligase beta subunit family. As to quaternary structure, heterotetramer of two alpha and two beta subunits. Mg(2+) is required as a cofactor.

The enzyme catalyses succinate + ATP + CoA = succinyl-CoA + ADP + phosphate. The catalysed reaction is GTP + succinate + CoA = succinyl-CoA + GDP + phosphate. Its pathway is carbohydrate metabolism; tricarboxylic acid cycle; succinate from succinyl-CoA (ligase route): step 1/1. In terms of biological role, succinyl-CoA synthetase functions in the citric acid cycle (TCA), coupling the hydrolysis of succinyl-CoA to the synthesis of either ATP or GTP and thus represents the only step of substrate-level phosphorylation in the TCA. The beta subunit provides nucleotide specificity of the enzyme and binds the substrate succinate, while the binding sites for coenzyme A and phosphate are found in the alpha subunit. This Jannaschia sp. (strain CCS1) protein is Succinate--CoA ligase [ADP-forming] subunit beta.